Here is a 1077-residue protein sequence, read N- to C-terminus: Deoxyribonuclease CdiA (1077 aa).

The tract at residues Ile-67–Ser-384 is FHA-2. Polar residues predominate over residues Gln-531–Gly-546. Residues Gln-531–Glu-555 are disordered. The VENN CT cleavage motif signature appears at Val-781 to Asn-784. The tract at residues Met-954–Lys-1077 is DNase activity.

Interacts with cognate immunity protein CdiI-YPIII, which blocks its toxic DNase activity. Zn(2+) is required as a cofactor.

It localises to the target cell. The protein localises to the target cell cytoplasm. Toxic component of a toxin-immunity protein module, which functions as a cellular contact-dependent growth inhibition (CDI) system. CDI modules allow bacteria to communicate with and inhibit the growth of closely related neighboring bacteria in a contact-dependent fashion. The C-terminal 123 residues (954-1077) has DNase activity in the presence of Zn(2+), converting supercoiled DNA into open-circular form. Toxic activity is neutralized by coexpression of the cognate immunity protein CdiI-YPIII, but not by non-cognate immunity proteins from other toxin-immunity modules. Expression of the DNase domain as a chimera allows bacteria to attack other non-immune bacteria which become filamentous and have lost DNA staining. Its function is as follows. The CdiA protein is thought to be exported from the cell through the central lumen of CdiB, the other half of its two-partner system (TPS). The TPS domain probably remains associated with CdiB while the FHA-1 domain forms an extended filament with the receptor-binding domain (RBD) at its extremity; in the secretion arrested state the C-terminus of the RBD and YP domains form a hairpin-like structure as the FHA-2, PT and CT domains are periplasmic. The YP domain is probably responsible for this arrest at the point where it re-enters the host cell periplasm. Upon binding to a target cell outer membrane receptor a signal is transmitted to activate secretion. The filament elongates slightly, the rest of CdiA is secreted and the FHA-2 domain becomes stably associated with the target cell's outer membrane where it facilitates entry of the toxic CT domain into the target cell periplasm. From there the toxic CT domain is cleaved and gains access to the target cell cytoplasm via an inner membrane protein. This chain is Deoxyribonuclease CdiA, found in Yersinia pseudotuberculosis serotype O:3 (strain YPIII).